Consider the following 718-residue polypeptide: Polyribonucleotide nucleotidyltransferase (718 aa).

The Mg(2+) site is built by aspartate 497 and aspartate 503. The KH domain occupies 564 to 623 (PRLLTLKIEPEHIGMVIGPGGKTIKGITEQTSCKIDIADDGTVTIASSEGERAERARQMI). One can recognise an S1 motif domain in the interval 633-701 (GEVYLGRVTR…SKGRLNLTRL (69 aa)).

The protein belongs to the polyribonucleotide nucleotidyltransferase family. As to quaternary structure, interacts with RNase E (rne). Requires Mg(2+) as cofactor.

It localises to the cytoplasm. The enzyme catalyses RNA(n+1) + phosphate = RNA(n) + a ribonucleoside 5'-diphosphate. Functionally, involved in mRNA degradation. Catalyzes the phosphorolysis of single-stranded polyribonucleotides processively in the 3'- to 5'-direction. The sequence is that of Polyribonucleotide nucleotidyltransferase from Synechocystis sp. (strain ATCC 27184 / PCC 6803 / Kazusa).